The primary structure comprises 1509 residues: ABC transporter G family member 5 (1509 aa).

The segment covering 1–10 (MVKQDPRDKS) has biased composition (basic and acidic residues). The segment at 1–70 (MVKQDPRDKS…NNNNNNIKHK (70 aa)) is disordered. The segment covering 11–28 (SYSPNLSIPINNQEEPTL) has biased composition (polar residues). The span at 29–66 (NNNNNNNNNNNNNNNNNNNNNNNNNNNNNNNKNNNNNN) shows a compositional bias: low complexity. Positions 129 to 376 (VYCRNATYTV…FKKLGFACPS (248 aa)) constitute an ABC transporter 1 domain. An ATP-binding site is contributed by 168–175 (GTPGCGKS). The ABC transmembrane type-2 1 domain occupies 472 to 748 (SRNYYNFATR…SVCFFALKYL (277 aa)). The next 7 membrane-spanning stretches (helical) occupy residues 477-497 (NFAT…TLYW), 512-532 (LLFF…NSFF), 557-577 (IICD…IVYW), 583-603 (PVFI…NLSL), 616-636 (IEIA…FSGF), 643-663 (IGGW…FQGL), and 725-745 (IVYA…FFAL). Over residues 813–831 (PLTSPNYNNNNNLSGSGNN) the composition is skewed to low complexity. Residues 813–881 (PLTSPNYNNN…PISTSQKDIS (69 aa)) are disordered. Over residues 839-881 (TPSTLSPMVNSPLTNLSPMVNTPSKNGNHSKQKPISTSQKDIS) the composition is skewed to polar residues. The region spanning 888 to 1141 (LQFKKLCYAV…VILDYCDKLG (254 aa)) is the ABC transporter 2 domain. Residue 935–942 (GPSGAGKS) participates in ATP binding. Positions 1231 to 1504 (LRRPAIFVSN…GLSFWGFKKV (274 aa)) constitute an ABC transmembrane type-2 2 domain. 6 helical membrane-spanning segments follow: residues 1236 to 1256 (IFVS…TLFV), 1271 to 1291 (LLFF…PTTV), 1320 to 1340 (YPFI…IAGL), 1352 to 1372 (CLFI…CLAV), 1379 to 1399 (MAST…GFVI), and 1481 to 1501 (IDIA…FWGF).

This sequence belongs to the ABC transporter superfamily. ABCG family. PDR (TC 3.A.1.205) subfamily.

It is found in the membrane. The polypeptide is ABC transporter G family member 5 (abcG5) (Dictyostelium discoideum (Social amoeba)).